A 168-amino-acid chain; its full sequence is Photosystem I assembly protein Ycf3 (168 aa).

TPR repeat units lie at residues 35–68, 72–105, and 120–153; these read AFTYYRDGMSAQSEGNYAEALQNYYEATRLEIDP, SYILYNIGLIHTSNGEHTKALEYYSRALERNPFL, and GEQAIRQGDSEIAEAWSDQAAEYWKQAIALTPGN.

Belongs to the Ycf3 family.

The protein localises to the plastid. It localises to the chloroplast thylakoid membrane. In terms of biological role, essential for the assembly of the photosystem I (PSI) complex. May act as a chaperone-like factor to guide the assembly of the PSI subunits. The sequence is that of Photosystem I assembly protein Ycf3 from Buxus microphylla (Littleleaf boxwood).